The primary structure comprises 1279 residues: Botulinum-like toxin eBoNT/J (1279 aa).

His-225 serves as a coordination point for Zn(2+). Glu-226 is a catalytic residue. Zn(2+)-binding residues include His-229 and Glu-269. An intrachain disulfide couples Cys-424 to Cys-438. Residues 435 to 843 (LSSCIEILED…RLTSLPVFNL (409 aa)) are translocation domain (TD). The tract at residues 476-525 (ADTILDSTLSNYDFSKEINFTSTVPIITVEDPLETDEDVPVISEDRTVYV) is belt; not required for channel formation. Residues 860 to 1080 (IDIQDSEVLN…EVNRLYWKYF (221 aa)) are N-terminus of receptor binding domain (N-RBD). The segment at 1081-1279 (EGSYLRDVWG…IPVDEGWKED (199 aa)) is C-terminus of receptor binding domain (C-RBD). The short motif at 1250 to 1253 (SAWY) is the Host ganglioside-binding motif element.

It belongs to the peptidase M27 family. As to quaternary structure, might be a disulfide-linked heterodimer of a light chain (LC) and heavy chain (HC). Zn(2+) serves as cofactor.

It localises to the secreted. The protein resides in the host cytoplasm. The protein localises to the host cytosol. It is found in the host cell membrane. Its subcellular location is the host cytoplasmic vesicle membrane. It catalyses the reaction Limited hydrolysis of proteins of the neuroexocytosis apparatus, synaptobrevins, SNAP25 or syntaxin. No detected action on small molecule substrates.. Functionally, strongly resembles a botulinum-type toxin, with the appropriate domains and residues to have proteolytic function, although its C-terminus (which binds to a eukaryotic host cell) is different enough from clostrial botulinum toxins that it might bind another cell target. Might be a precursor of a toxin that binds to an unknown eukaryotic cell receptor(s), and be taken up into the host cell via the endocytic pathway. When the pH of the putative toxin-containing endosome drops a structural rearrangement occurs so that the N-terminus of the heavy chain forms pores that allows the light chain to translocate into the cytosol. Once in the cytosol the disulfide bond linking the 2 subunits is reduced and light chain cleaves its target protein. The protein is Botulinum-like toxin eBoNT/J of Enterococcus sp. (strain 3G1_DIV0629).